Reading from the N-terminus, the 89-residue chain is Small ribosomal subunit protein uS15 (89 aa).

Belongs to the universal ribosomal protein uS15 family. As to quaternary structure, part of the 30S ribosomal subunit. Forms a bridge to the 50S subunit in the 70S ribosome, contacting the 23S rRNA.

Functionally, one of the primary rRNA binding proteins, it binds directly to 16S rRNA where it helps nucleate assembly of the platform of the 30S subunit by binding and bridging several RNA helices of the 16S rRNA. In terms of biological role, forms an intersubunit bridge (bridge B4) with the 23S rRNA of the 50S subunit in the ribosome. The sequence is that of Small ribosomal subunit protein uS15 from Streptococcus pneumoniae (strain P1031).